The sequence spans 174 residues: Small ribosomal subunit protein uS12m (174 aa).

The protein belongs to the universal ribosomal protein uS12 family. As to quaternary structure, component of the mitochondrial small ribosomal subunit (mt-SSU). Mature N.crassa 74S mitochondrial ribosomes consist of a small (37S) and a large (54S) subunit. The 37S small subunit contains a 16S ribosomal RNA (16S mt-rRNA) and 32 different proteins. The 54S large subunit contains a 23S rRNA (23S mt-rRNA) and 42 different proteins. uS12m forms part of the decoding center of the mt-SSU.

The protein resides in the mitochondrion. Its function is as follows. Component of the mitochondrial ribosome (mitoribosome), a dedicated translation machinery responsible for the synthesis of mitochondrial genome-encoded proteins, including at least some of the essential transmembrane subunits of the mitochondrial respiratory chain. The mitoribosomes are attached to the mitochondrial inner membrane and translation products are cotranslationally integrated into the membrane. The protein is Small ribosomal subunit protein uS12m (mrps12) of Neurospora crassa (strain ATCC 24698 / 74-OR23-1A / CBS 708.71 / DSM 1257 / FGSC 987).